Consider the following 201-residue polypeptide: Proteasome subunit beta 1 (201 aa).

Residues Met-1–Gly-10 constitute a propeptide, removed in mature form; by autocatalysis. Thr-11 functions as the Nucleophile in the catalytic mechanism.

Belongs to the peptidase T1B family. As to quaternary structure, the 20S proteasome core is composed of 14 alpha and 14 beta subunits that assemble into four stacked heptameric rings, resulting in a barrel-shaped structure. The two inner rings, each composed of seven catalytic beta subunits, are sandwiched by two outer rings, each composed of seven alpha subunits. The catalytic chamber with the active sites is on the inside of the barrel. Has a gated structure, the ends of the cylinder being occluded by the N-termini of the alpha-subunits. Is capped at one or both ends by the proteasome regulatory ATPase, PAN.

Its subcellular location is the cytoplasm. The enzyme catalyses Cleavage of peptide bonds with very broad specificity.. Its activity is regulated as follows. The formation of the proteasomal ATPase PAN-20S proteasome complex, via the docking of the C-termini of PAN into the intersubunit pockets in the alpha-rings, triggers opening of the gate for substrate entry. Interconversion between the open-gate and close-gate conformations leads to a dynamic regulation of the 20S proteasome proteolysis activity. In terms of biological role, component of the proteasome core, a large protease complex with broad specificity involved in protein degradation. In Thermococcus gammatolerans (strain DSM 15229 / JCM 11827 / EJ3), this protein is Proteasome subunit beta 1.